Here is a 1117-residue protein sequence, read N- to C-terminus: Protein rliB (1117 aa).

The signal sequence occupies residues 1-23; that stretch reads MKNINNKILKIFILFLAICSVKS. N-linked (GlcNAc...) asparagine glycans are attached at residues N136, N195, N279, and N318. The region spanning 266–392 is the G8 domain; it reads STWSNNLVPQ…YHNSWTKLAS (127 aa). PbH1 repeat units follow at residues 522-544 and 545-567; these read VQKS…TIHG and TNNL…YLED. N-linked (GlcNAc...) asparagine glycosylation is found at N547 and N605. A PbH1 3 repeat occupies 621–642; that stretch reads NAYNTIIGNSASGGWAGFSFPN. 6 N-linked (GlcNAc...) asparagine glycosylation sites follow: N728, N845, N1030, N1044, N1091, and N1107.

This sequence belongs to the comF family.

The protein resides in the secreted. The protein is Protein rliB (rliB) of Dictyostelium discoideum (Social amoeba).